We begin with the raw amino-acid sequence, 308 residues long: Ribonuclease HIII (308 aa).

In terms of domain architecture, RNase H type-2 spans 93–308 (MSVLGSDETG…ANTEKARKMI (216 aa)). A divalent metal cation-binding residues include Asp99, Glu100, and Asp204.

This sequence belongs to the RNase HII family. RnhC subfamily. Mn(2+) serves as cofactor. Mg(2+) is required as a cofactor.

It is found in the cytoplasm. The catalysed reaction is Endonucleolytic cleavage to 5'-phosphomonoester.. In terms of biological role, endonuclease that specifically degrades the RNA of RNA-DNA hybrids. The chain is Ribonuclease HIII from Lysinibacillus sphaericus (strain C3-41).